The following is a 428-amino-acid chain: Anaerobic glycerol-3-phosphate dehydrogenase subunit B (428 aa).

This sequence belongs to the anaerobic G-3-P dehydrogenase subunit B family. In terms of assembly, composed of a catalytic GlpA/B dimer and of membrane bound GlpC. Requires FMN as cofactor.

It carries out the reaction a quinone + sn-glycerol 3-phosphate = dihydroxyacetone phosphate + a quinol. The protein operates within polyol metabolism; glycerol degradation via glycerol kinase pathway; glycerone phosphate from sn-glycerol 3-phosphate (anaerobic route): step 1/1. Its function is as follows. Conversion of glycerol 3-phosphate to dihydroxyacetone. Uses fumarate or nitrate as electron acceptor. This Actinobacillus pleuropneumoniae serotype 5b (strain L20) protein is Anaerobic glycerol-3-phosphate dehydrogenase subunit B.